Here is a 247-residue protein sequence, read N- to C-terminus: ATP synthase subunit a, chloroplastic (247 aa).

Helical transmembrane passes span 38–58 (QVLI…TLAV), 95–115 (VPFI…GALL), 134–154 (INTT…AGLS), 199–219 (LVVV…VMFL), and 220–240 (GLFT…AYIG).

It belongs to the ATPase A chain family. F-type ATPases have 2 components, CF(1) - the catalytic core - and CF(0) - the membrane proton channel. CF(1) has five subunits: alpha(3), beta(3), gamma(1), delta(1), epsilon(1). CF(0) has four main subunits: a, b, b' and c.

Its subcellular location is the plastid. The protein resides in the chloroplast thylakoid membrane. In terms of biological role, key component of the proton channel; it plays a direct role in the translocation of protons across the membrane. In Lemna minor (Common duckweed), this protein is ATP synthase subunit a, chloroplastic.